A 371-amino-acid polypeptide reads, in one-letter code: Cytochrome b (371 aa).

Transmembrane regions (helical) follow at residues 25–45, 69–90, 105–125, and 170–190; these read FGSMLLTCLALQVLTGFFLAV, WMMQNLHAIGASMFFICIYIHI, WMSGITLLITLMATAFFGYVL, and FFALHFILPFEIISLSSLHII. Heme b-binding residues include His-75 and His-89. Heme b contacts are provided by His-174 and His-188. An a ubiquinone-binding site is contributed by His-193. Helical transmembrane passes span 218-238, 280-300, 312-332, and 339-358; these read HKDLLLLTLMILLLFITMSFF, LGGALALVTSIMILFTIPFTH, LSQLMFWTLVSTFITITWAAT, and FIIISQATSLLYFTFFLSFP.

It belongs to the cytochrome b family. In terms of assembly, the cytochrome bc1 complex contains 3 respiratory subunits (MT-CYB, CYC1 and UQCRFS1), 2 core proteins (UQCRC1 and UQCRC2) and probably 6 low-molecular weight proteins. Heme b is required as a cofactor.

Its subcellular location is the mitochondrion inner membrane. In terms of biological role, component of the ubiquinol-cytochrome c reductase complex (complex III or cytochrome b-c1 complex) that is part of the mitochondrial respiratory chain. The b-c1 complex mediates electron transfer from ubiquinol to cytochrome c. Contributes to the generation of a proton gradient across the mitochondrial membrane that is then used for ATP synthesis. This is Cytochrome b (MT-CYB) from Apodora papuana (Papuan olive python).